The sequence spans 334 residues: Nucleoid-associated protein Pfl01_0983 (334 aa).

It belongs to the YejK family.

The protein localises to the cytoplasm. The protein resides in the nucleoid. This chain is Nucleoid-associated protein Pfl01_0983, found in Pseudomonas fluorescens (strain Pf0-1).